The following is a 322-amino-acid chain: Transcription initiation factor IIB (322 aa).

Repeat copies occupy residues 125-213 (SLIN…VRDL) and 224-305 (NFVY…EIAQ).

It belongs to the TFIIB family.

Stabilizes TBP binding to an archaeal box-A promoter. Also responsible for recruiting RNA polymerase II to the pre-initiation complex (DNA-TBP-TFIIB). The sequence is that of Transcription initiation factor IIB from Aeropyrum pernix (strain ATCC 700893 / DSM 11879 / JCM 9820 / NBRC 100138 / K1).